The chain runs to 421 residues: tRNA (guanine-N(7)-)-methyltransferase non-catalytic subunit TRM82 (421 aa).

WD repeat units lie at residues Ala72 to Glu112, Gly170 to Lys212, and Gly216 to Ser258.

The protein belongs to the WD repeat TRM82 family. Forms a heterodimer with the catalytic subunit TRM8.

It is found in the nucleus. It participates in tRNA modification; N(7)-methylguanine-tRNA biosynthesis. Its function is as follows. Required for the formation of N(7)-methylguanine at position 46 (m7G46) in tRNA. In the complex, it is required to stabilize and induce conformational changes of the catalytic subunit. The polypeptide is tRNA (guanine-N(7)-)-methyltransferase non-catalytic subunit TRM82 (Candida glabrata (strain ATCC 2001 / BCRC 20586 / JCM 3761 / NBRC 0622 / NRRL Y-65 / CBS 138) (Yeast)).